The primary structure comprises 413 residues: Serine hydroxymethyltransferase (413 aa).

(6S)-5,6,7,8-tetrahydrofolate is bound by residues leucine 117 and 121–123 (GHL). Lysine 226 carries the post-translational modification N6-(pyridoxal phosphate)lysine. Residues glutamate 239 and 349 to 351 (SPF) contribute to the (6S)-5,6,7,8-tetrahydrofolate site.

The protein belongs to the SHMT family. Homodimer. It depends on pyridoxal 5'-phosphate as a cofactor.

It is found in the cytoplasm. It catalyses the reaction (6R)-5,10-methylene-5,6,7,8-tetrahydrofolate + glycine + H2O = (6S)-5,6,7,8-tetrahydrofolate + L-serine. Its pathway is one-carbon metabolism; tetrahydrofolate interconversion. It participates in amino-acid biosynthesis; glycine biosynthesis; glycine from L-serine: step 1/1. Catalyzes the reversible interconversion of serine and glycine with tetrahydrofolate (THF) serving as the one-carbon carrier. This reaction serves as the major source of one-carbon groups required for the biosynthesis of purines, thymidylate, methionine, and other important biomolecules. Also exhibits THF-independent aldolase activity toward beta-hydroxyamino acids, producing glycine and aldehydes, via a retro-aldol mechanism. This is Serine hydroxymethyltransferase from Bacillus cytotoxicus (strain DSM 22905 / CIP 110041 / 391-98 / NVH 391-98).